The sequence spans 488 residues: Malonate-semialdehyde dehydrogenase (488 aa).

The NAD(+) site is built by alanine 150, phenylalanine 152, lysine 176, glutamate 179, arginine 180, serine 229, and threonine 251. Cysteine 284 acts as the Nucleophile in catalysis. Glutamate 382 contacts NAD(+).

It belongs to the aldehyde dehydrogenase family. IolA subfamily. In terms of assembly, homotetramer.

It carries out the reaction 3-oxopropanoate + NAD(+) + CoA + H2O = hydrogencarbonate + acetyl-CoA + NADH + H(+). The catalysed reaction is 2-methyl-3-oxopropanoate + NAD(+) + CoA + H2O = propanoyl-CoA + hydrogencarbonate + NADH + H(+). Its pathway is polyol metabolism; myo-inositol degradation into acetyl-CoA; acetyl-CoA from myo-inositol: step 7/7. Catalyzes the oxidation of malonate semialdehyde (MSA) and methylmalonate semialdehyde (MMSA) into acetyl-CoA and propanoyl-CoA, respectively. Is involved in a myo-inositol catabolic pathway. Bicarbonate, and not CO2, is the end-product of the enzymatic reaction. The sequence is that of Malonate-semialdehyde dehydrogenase from Listeria innocua serovar 6a (strain ATCC BAA-680 / CLIP 11262).